The chain runs to 166 residues: UPF0178 protein BPUM_2255 (166 aa).

Belongs to the UPF0178 family.

The protein is UPF0178 protein BPUM_2255 of Bacillus pumilus (strain SAFR-032).